A 198-amino-acid chain; its full sequence is HTH-type transcriptional regulator BetI (198 aa).

The 61-residue stretch at 8 to 68 (PLRRRELIDA…ATMRHLLREL (61 aa)) folds into the HTH tetR-type domain. Residues 31-50 (TVAQIAHEAGVSPALAHHYF) constitute a DNA-binding region (H-T-H motif).

It participates in amine and polyamine biosynthesis; betaine biosynthesis via choline pathway [regulation]. Repressor involved in the biosynthesis of the osmoprotectant glycine betaine. It represses transcription of the choline transporter BetT and the genes of BetAB involved in the synthesis of glycine betaine. This chain is HTH-type transcriptional regulator BetI, found in Brucella suis biovar 1 (strain 1330).